The sequence spans 388 residues: Subtilisin-like serine protease AsES (388 aa).

The first 15 residues, 1-15, serve as a signal peptide directing secretion; it reads MRLSLVLALLPVAFG. Positions 16-105 are cleaved as a propeptide — removed in mature form; it reads APTRRDEPAP…IEQDAIVTLA (90 aa). The Peptidase S8 domain maps to 114–388; sequence PWGLARISTR…RLAFNGNPSG (275 aa). An intrachain disulfide couples C141 to C230. Residues D146 and H176 each act as charge relay system in the active site. N-linked (GlcNAc...) asparagine glycans are attached at residues N232 and N237. A disulfide bridge connects residues C285 and C357. S331 functions as the Charge relay system in the catalytic mechanism.

This sequence belongs to the peptidase S8 family.

It is found in the secreted. With respect to regulation, the elicitor proteolytic activity is completely inhibited by PMSF. The activity is also significantly reduced by aprotinin (leading to 37% residual activity), by leupeptin (leading to 54% residual activity), by the ovomucoid trypsin inhibitor (leading to 65% residual activity), and by p-aminobenzamidine (leading to 26% residual activity). In terms of biological role, extracellular elicitor protein that induces a strong defense response in strawberry and confers both local and systemic plant resistance against the fungal pathogen Colletotricum acutatum, the casual agent of anthracnose disease. AsES activates a cascade of defense responses, including calcium influx, oxidative burst, hypersensitive cell-death response (HR), accumulation of autofluorescent compounds, cell-wall reinforcement with callose and lignin deposition, salicylic acid accumulation, and expression of defense-related genes, such as PR1, PG1, MYB30, RBOH-D, RBOH-F, CHI23, and FLS. The oxidative burst consists in a progressive extracellular accumulation of H(2)O(2) that starts immediately after the contact with AsES and is preceded by a rapid and transient cell membrane depolarization. During this phase takes place also a rapid intracellular accumulation of NO at the chloroplasts. After the first extracellular H(2)O(2) production phase, two intracellular H(2)O(2) accumulation events occur, the first 2 hours after induction, and the second 7 hours after induction. AsES also produces a transient increase of ion leakage, and a progressive alkalinization of the extracellular medium. Confers also local and systemic plant resistance against Botrytis cinerea in Arabidopsis thaliana. Systemic, but not local resistance is dependent on the length of exposure to AsES. The protection to B.cinerea is due to the induction of the plant defenses via the salicylic acid, jasmonic acid and ethylene signaling pathways. Exhibits subtilisin-like proteolytic activity which is necessary but not sufficient for its elicitor function in strawberry plants. Probably induces defense by means of proteolysis of one or multiple host proteins that are specific targets of this protease. The sequence is that of Subtilisin-like serine protease AsES from Sarocladium strictum (Black bundle disease fungus).